A 71-amino-acid polypeptide reads, in one-letter code: Arrestin-D (71 aa).

It belongs to the arrestin family. In terms of tissue distribution, adrenal, cerebral cortex, heart, liver, lung, pituitary and testis.

The protein is Arrestin-D (Dar) of Rattus norvegicus (Rat).